We begin with the raw amino-acid sequence, 406 residues long: Phosphopentomutase (406 aa).

Residues Asp10, Asp305, His310, Asp346, His347, and His358 each contribute to the Mn(2+) site.

It belongs to the phosphopentomutase family. Mn(2+) is required as a cofactor.

It is found in the cytoplasm. It carries out the reaction 2-deoxy-alpha-D-ribose 1-phosphate = 2-deoxy-D-ribose 5-phosphate. The catalysed reaction is alpha-D-ribose 1-phosphate = D-ribose 5-phosphate. It participates in carbohydrate degradation; 2-deoxy-D-ribose 1-phosphate degradation; D-glyceraldehyde 3-phosphate and acetaldehyde from 2-deoxy-alpha-D-ribose 1-phosphate: step 1/2. Functionally, isomerase that catalyzes the conversion of deoxy-ribose 1-phosphate (dRib-1-P) and ribose 1-phosphate (Rib-1-P) to deoxy-ribose 5-phosphate (dRib-5-P) and ribose 5-phosphate (Rib-5-P), respectively. In Aliivibrio salmonicida (strain LFI1238) (Vibrio salmonicida (strain LFI1238)), this protein is Phosphopentomutase.